The following is a 1935-amino-acid chain: Myosin-7 (1935 aa).

The 50-residue stretch at 32–81 (DLKKDVFVPDDKQEFVKAKIVSREGGKVTAETEYGKTVTVKEDQVMQQNP) folds into the Myosin N-terminal SH3-like domain. The Myosin motor domain occupies 85-778 (DKIEDMAMLT…LLGLLEEMRD (694 aa)). Lysine 129 carries the post-translational modification N6,N6,N6-trimethyllysine. An ATP-binding site is contributed by 178–185 (GESGAGKT). Threonine 378 carries the post-translational modification Phosphothreonine. Actin-binding regions lie at residues 655 to 677 (LNKL…IPNE) and 757 to 771 (KFGH…GLLG). The IQ domain maps to 781-810 (LSRIITRIQAQSRGVLARMEYKKLLERRDS). Residues 839–1935 (LLKSAEREKE…DIGTKGLNEE (1097 aa)) adopt a coiled-coil conformation. Phosphoserine is present on residues serine 1137 and serine 1269. The residue at position 1282 (threonine 1282) is a Phosphothreonine. Residue tyrosine 1308 is modified to Phosphotyrosine. A Phosphothreonine modification is found at threonine 1309. Serine 1510 carries the post-translational modification Phosphoserine. Residue threonine 1513 is modified to Phosphothreonine. A disordered region spans residues 1907–1935 (EERADIAESQVNKLRAKSRDIGTKGLNEE). The segment covering 1923–1935 (KSRDIGTKGLNEE) has biased composition (basic and acidic residues).

It belongs to the TRAFAC class myosin-kinesin ATPase superfamily. Myosin family. As to quaternary structure, muscle myosin is a hexameric protein that consists of 2 heavy chain subunits (MHC), 2 alkali light chain subunits (MLC) and 2 regulatory light chain subunits (MLC-2). Interacts with ECPAS. Interacts (via C-terminus) with LRRC39. Both wild type and variant Gln-403 are detected in skeletal muscle (at protein level).

It is found in the cytoplasm. The protein localises to the myofibril. The protein resides in the sarcomere. Functionally, myosins are actin-based motor molecules with ATPase activity essential for muscle contraction. Forms regular bipolar thick filaments that, together with actin thin filaments, constitute the fundamental contractile unit of skeletal and cardiac muscle. This Homo sapiens (Human) protein is Myosin-7 (MYH7).